The following is a 760-amino-acid chain: MALPTIDLKIPEYEECQHKITDFLSHFKQEQVQDGQQNQDISMSDAGDEPFLKSKYMDILQKISNRESNVINVDLNDLYEFDPSDTQLLHNIESNAKRFVELFSQCADALMPPPTVEINYRNEVLDVIMQQRVQRNENIDPEHKGFPPELTRGYDLYFRPVTRNKKPFSVRDLRGENLGSLLTVRGIVTRTSDVKPSLTVNAYTCDRCGYEVFQEIRQKTFLPMSECPSDECKKNDAKGQLFMSTRASKFLPFQEVKIQELTNQVPIGHIPRSLTVHLYGAITRSVNPGDIVDISGIFLPTPYTGFRAMRAGLLTDTYLECHYVSQIIKNYTNIEKTPQSEAAIAELNQGGNVYEKLAKSIAPEIYGHEDVKKALLLLLVGGVTKELGDGMRIRGDINICLTGDPGVAKSQLLKYISKVAPRGVYTTGRGSSGVGLTAAVMRDPVTDEMVLEGGALVLADNGICCIDEFDKMDESDRTAIHEVMEQQTISISKAGITTTLNARTSILAAANPLYGRYNPKVAPIHNINLPAALLSRFDILFLILDTPSRETDEHLAQHVTYVHMHNEQPKMDFEPLDPNMIRHYISSARQYRPVVPKDVCDYVTGAYVQLRQNQKRDEANERQFAHTTPRTLLAILRMGQALARLRFSNRVEIGDVDEALRLMSVSKSSLYDDLDPSSHDTTITSKIYKIIRDMLNSIPDVEGNERSLTLRAIRERVLAKGFTEDHLINTIQEYTDLGVLLTTNNGQTIMFLDPDLHMEN.

The region spanning 353-559 (VYEKLAKSIA…ETDEHLAQHV (207 aa)) is the MCM domain. ATP contacts are provided by Tyr366, Gly406, Ala408, Lys409, Ser410, Asn511, Arg536, and Arg630. The Arginine finger signature appears at 535–538 (SRFD).

The protein belongs to the MCM family. In terms of assembly, component of the mcm2-7 complex. The complex forms a toroidal hexameric ring with the proposed subunit order mcm2-mcm6-mcm4-mcm7-mcm3-mcm5. The heterodimers of mcm4/mcm6 and mcm3/mcm5 interact with mcm2 and mcm7. Interacts with sld3 and mcm10.

It localises to the nucleus. It catalyses the reaction ATP + H2O = ADP + phosphate + H(+). Its function is as follows. Acts as a component of the MCM2-7 complex (MCM complex) which is the replicative helicase essential for 'once per cell cycle' DNA replication initiation and elongation in eukaryotic cells. Core component of CDC45-MCM-GINS (CMG) helicase, the molecular machine that unwinds template DNA during replication, and around which the replisome is built. The active ATPase sites in the MCM2-7 ring are formed through the interaction surfaces of two neighboring subunits such that a critical structure of a conserved arginine finger motif is provided in trans relative to the ATP-binding site of the Walker A box of the adjacent subunit. The six ATPase active sites, however, are likely to contribute differentially to the complex helicase activity. Required for the progression of S phase. The protein is DNA replication licensing factor mcm7 (mcm7) of Schizosaccharomyces pombe (strain 972 / ATCC 24843) (Fission yeast).